Consider the following 82-residue polypeptide: Cytochrome b559 subunit alpha (82 aa).

The chain crosses the membrane as a helical span at residues 22-36 (IIHAVTLPAIFIAGF). His-24 contributes to the heme binding site.

The protein belongs to the PsbE/PsbF family. In terms of assembly, heterodimer of an alpha subunit and a beta subunit. PSII is composed of 1 copy each of membrane proteins PsbA, PsbB, PsbC, PsbD, PsbE, PsbF, PsbH, PsbI, PsbJ, PsbK, PsbL, PsbM, PsbT, PsbX, PsbY, Psb30/Ycf12, peripheral proteins PsbO, CyanoQ (PsbQ), PsbU, PsbV and a large number of cofactors. It forms dimeric complexes. The cofactor is heme b.

It is found in the cellular thylakoid membrane. This b-type cytochrome is tightly associated with the reaction center of photosystem II (PSII). PSII is a light-driven water:plastoquinone oxidoreductase that uses light energy to abstract electrons from H(2)O, generating O(2) and a proton gradient subsequently used for ATP formation. It consists of a core antenna complex that captures photons, and an electron transfer chain that converts photonic excitation into a charge separation. The sequence is that of Cytochrome b559 subunit alpha from Prochlorococcus marinus (strain SARG / CCMP1375 / SS120).